We begin with the raw amino-acid sequence, 93 residues long: Hematopoietic cell signal transducer (93 aa).

An N-terminal signal peptide occupies residues 1–18 (MIHLGHILFLLLLPVAAA). Topologically, residues 19–48 (QTTPGERSSLPAFYPGTSGSCSGCGSLSLP) are extracellular. The chain crosses the membrane as a helical span at residues 49–69 (LLAGLVAADAVASLLIVGAVF). The Cytoplasmic portion of the chain corresponds to 70–93 (LCARPRRSPAQEDGKVYINMPGRG). Residue tyrosine 86 is modified to Phosphotyrosine. Residues 86 to 88 (YIN) are GRB2 binding site. The tract at residues 86–89 (YINM) is PIK3R1 binding site.

The protein belongs to the DAP10 family. As to quaternary structure, interacts with CLEC5A. Forms an CLEC5A/TYROBP/HCST trimolecular complex depending almost solely on TYROBP. Homodimer; Disulfide-linked. Heterohexamer composed of four subunits of HCST/DAP10 and two subunits of KLRK1. Interacts (via transmembrane domain) with KLRK1 (via transmembrane domain); the interaction is required for KLRK1 NK cell surface and induces NK cell-mediated cytotoxicity. Interacts with PIK3R1 and GRB2. Interacts with CD300H. Phosphorylated; PIK3R1 and GRB2 associate specifically with tyrosine-phosphorylated HCST. Post-translationally, O-glycosylated. In terms of tissue distribution, predominantly expressed in hemopoietic cells such as NK cells, subset of T-cells and monocytes. Detected in leukocytes, spleen, and thymus.

Its subcellular location is the membrane. Functionally, transmembrane adapter protein which associates with KLRK1 to form an activation receptor KLRK1-HCST in lymphoid and myeloid cells; this receptor plays a major role in triggering cytotoxicity against target cells expressing cell surface ligands such as MHC class I chain-related MICA and MICB, and UL16-binding proteins (ULBPs); these ligands are up-regulated by stress conditions and pathological state such as viral infection and tumor transformation. Functions as a docking site for PI3-kinase PIK3R1 and GRB2. Interaction of ULBPs with KLRK1-HCST triggers calcium mobilization and activation of the PIK3R1, MAP2K/ERK, and JAK2/STAT5 signaling pathways. Both PIK3R1 and GRB2 are required for full KLRK1-HCST-mediated activation and ultimate killing of target cells. In NK cells, KLRK1-HCST signaling directly induces cytotoxicity and enhances cytokine production initiated via DAP12/TYROBP-associated receptors. In T-cells, it provides primarily costimulation for TCR-induced signals. KLRK1-HCST receptor plays a role in immune surveillance against tumors and is required for cytolysis of tumors cells; indeed, melanoma cells that do not express KLRK1 ligands escape from immune surveillance mediated by NK cells. This Homo sapiens (Human) protein is Hematopoietic cell signal transducer (HCST).